We begin with the raw amino-acid sequence, 364 residues long: ERCC4 domain-containing protein EP364R (364 aa).

Residues phenylalanine 3–alanine 102 form the ERCC4 domain. Polar residues predominate over residues alanine 319–alanine 328. The tract at residues alanine 319–histidine 352 is disordered. Residues aspartate 338–serine 348 show a composition bias toward low complexity.

This sequence belongs to the asfivirus EP364R family.

Its function is as follows. Plays a role in the inhibition of type I interferon signaling pathway. Mechanistically, specifically interacts with 2',3'-cGAMP and cleaves it via its phosphodiesterase activity. In turn, prevents 2',3'-cGAMP interaction with host ER-resident STING1 leading to inhibition of downstream signaling pathway and type I interferon production. The polypeptide is ERCC4 domain-containing protein EP364R (African swine fever virus (strain Badajoz 1971 Vero-adapted) (Ba71V)).